We begin with the raw amino-acid sequence, 124 residues long: Large ribosomal subunit protein bL12 (124 aa).

This sequence belongs to the bacterial ribosomal protein bL12 family. In terms of assembly, homodimer. Part of the ribosomal stalk of the 50S ribosomal subunit. Forms a multimeric L10(L12)X complex, where L10 forms an elongated spine to which 2 to 4 L12 dimers bind in a sequential fashion. Binds GTP-bound translation factors.

Forms part of the ribosomal stalk which helps the ribosome interact with GTP-bound translation factors. Is thus essential for accurate translation. This Ralstonia pickettii (strain 12J) protein is Large ribosomal subunit protein bL12.